We begin with the raw amino-acid sequence, 238 residues long: Formate dehydrogenase, cytochrome b556 subunit (238 aa).

Residues H23 and H62 each coordinate heme b. 4 helical membrane passes run 23–43 (HWML…FFFP), 60–80 (AIHP…ALLY), 120–140 (MLFW…IIMW), and 155–175 (IAIL…LVHI). Heme b-binding residues include H160 and H174.

The protein belongs to the formate dehydrogenase gamma subunit family. Formate dehydrogenase is a membrane-bound complex, formed by subunits alpha, beta and gamma. The cofactor is heme.

The protein resides in the cell membrane. Functionally, allows to use formate as major electron donor during anaerobic respiration. Subunit gamma is probably the cytochrome b556(FDO) component of the formate dehydrogenase. This is Formate dehydrogenase, cytochrome b556 subunit (fdxI) from Haemophilus influenzae (strain ATCC 51907 / DSM 11121 / KW20 / Rd).